The chain runs to 133 residues: CDGSH iron-sulfur domain-containing protein 2 homolog (133 aa).

Over Met-1–Asp-35 the chain is Lumenal. A helical membrane pass occupies residues Trp-36 to Cys-58. The Cytoplasmic portion of the chain corresponds to Pro-59–Lys-133. [2Fe-2S] cluster is bound by residues Cys-100, Cys-102, Cys-111, and His-115.

The protein belongs to the CISD protein family. CISD2 subfamily. The cofactor is [2Fe-2S] cluster.

It localises to the endoplasmic reticulum membrane. The protein is CDGSH iron-sulfur domain-containing protein 2 homolog of Drosophila sechellia (Fruit fly).